The sequence spans 226 residues: Lipoprotein-releasing system ATP-binding protein LolD (226 aa).

One can recognise an ABC transporter domain in the interval 6 to 226 (LSVEQVSKSF…QLQQGSLIRI (221 aa)). 42–49 (GESGCGKS) is a binding site for ATP.

Belongs to the ABC transporter superfamily. Lipoprotein translocase (TC 3.A.1.125) family. As to quaternary structure, the complex is composed of two ATP-binding proteins (LolD) and two transmembrane proteins (LolC and LolE).

Its subcellular location is the cell inner membrane. In terms of biological role, part of the ABC transporter complex LolCDE involved in the translocation of mature outer membrane-directed lipoproteins, from the inner membrane to the periplasmic chaperone, LolA. Responsible for the formation of the LolA-lipoprotein complex in an ATP-dependent manner. The protein is Lipoprotein-releasing system ATP-binding protein LolD of Treponema pallidum (strain Nichols).